A 375-amino-acid chain; its full sequence is MHNGSPIIRRKSTRVYVGKVPIGDGAPIAVQSMTNTKTTDVDATVAQIKALERVGVDIVRVSIPTMDAAEAFKLIKQQSTVPLVADIHFDYRIALKVAEYGVDCLRINPGNIGNESRIREVVACARDYNIPIRIGINGGSLEKDIQEKYGEPTPEALLESAMRHVDILDRLNFDQFKVSVKASDVFLAVNSYRLLAKQINNPLHLGITEAGGARSGSVKSAIGLGLLLSEGIGDTLRISLAADPVEEVKVGFDILKSLRIRARGINFIACPTCSRQEFDVIGTVNALEQRLEDLITPMDVSIIGCVVNGPGEALVSTIGVTGARNHSGFYEDGVRQKERFDNKAMIDQLEAKIRAKASILDANNRIVINQLDDNK.

Residues cysteine 270, cysteine 273, cysteine 305, and glutamate 312 each coordinate [4Fe-4S] cluster.

This sequence belongs to the IspG family. [4Fe-4S] cluster is required as a cofactor.

It catalyses the reaction (2E)-4-hydroxy-3-methylbut-2-enyl diphosphate + oxidized [flavodoxin] + H2O + 2 H(+) = 2-C-methyl-D-erythritol 2,4-cyclic diphosphate + reduced [flavodoxin]. Its pathway is isoprenoid biosynthesis; isopentenyl diphosphate biosynthesis via DXP pathway; isopentenyl diphosphate from 1-deoxy-D-xylulose 5-phosphate: step 5/6. Converts 2C-methyl-D-erythritol 2,4-cyclodiphosphate (ME-2,4cPP) into 1-hydroxy-2-methyl-2-(E)-butenyl 4-diphosphate. The protein is 4-hydroxy-3-methylbut-2-en-1-yl diphosphate synthase (flavodoxin) of Yersinia pestis (strain Pestoides F).